The following is a 342-amino-acid chain: GTPase Obg (342 aa).

In terms of domain architecture, Obg spans 1–159; the sequence is MKFLDEAKVY…MWIWLRLKLI (159 aa). The 168-residue stretch at 160–327 folds into the OBG-type G domain; it reads ADAGLVGLPN…ALRALQTEID (168 aa). Residues 166–173, 191–195, 212–215, 279–282, and 308–310 contribute to the GTP site; these read GLPNAGKS, FTTLH, DIPG, SKAD, and SSA. Mg(2+)-binding residues include Ser173 and Thr193.

The protein belongs to the TRAFAC class OBG-HflX-like GTPase superfamily. OBG GTPase family. As to quaternary structure, monomer. The cofactor is Mg(2+).

It localises to the cytoplasm. An essential GTPase which binds GTP, GDP and possibly (p)ppGpp with moderate affinity, with high nucleotide exchange rates and a fairly low GTP hydrolysis rate. Plays a role in control of the cell cycle, stress response, ribosome biogenesis and in those bacteria that undergo differentiation, in morphogenesis control. This chain is GTPase Obg, found in Methylobacterium radiotolerans (strain ATCC 27329 / DSM 1819 / JCM 2831 / NBRC 15690 / NCIMB 10815 / 0-1).